The chain runs to 349 residues: uncharacterized protein (349 aa).

The THUMP domain occupies 51–160 (NIIKENKNNL…QDESYISIFQ (110 aa)).

This is an uncharacterized protein from Methanocaldococcus jannaschii (strain ATCC 43067 / DSM 2661 / JAL-1 / JCM 10045 / NBRC 100440) (Methanococcus jannaschii).